The chain runs to 197 residues: Recombination protein RecR (197 aa).

The segment at 56-71 adopts a C4-type zinc-finger fold; it reads CQRCHSFSDEAVCPLC. The region spanning 79 to 174 is the Toprim domain; sequence TLLCVVETAA…KVTRLAQGVP (96 aa).

The protein belongs to the RecR family.

Functionally, may play a role in DNA repair. It seems to be involved in an RecBC-independent recombinational process of DNA repair. It may act with RecF and RecO. The chain is Recombination protein RecR from Psychrobacter cryohalolentis (strain ATCC BAA-1226 / DSM 17306 / VKM B-2378 / K5).